The chain runs to 79 residues: uncharacterized protein (79 aa).

An N-terminal signal peptide occupies residues 1–19; it reads MKYVALAFVLSLVILQISA.

As to expression, nacreous layer of shell (at protein level). Expressed primarily in the mantle with highest level in the mantle pallium and lower level in the mantle edge.

The protein resides in the secreted. This is an uncharacterized protein from Pinctada maxima (Silver-lipped pearl oyster).